The chain runs to 442 residues: Mimosinase, chloroplastic (442 aa).

Residues 1–35 (MALPSAFLNPFVPSPVTANPRTKFARVGKGFNVSC) constitute a chloroplast transit peptide. 6 residues coordinate pyridoxal 5'-phosphate: Tyr103, Arg105, Gly133, Met134, Ser252, and Thr254. Position 255 is an N6-(pyridoxal phosphate)lysine (Lys255).

It belongs to the trans-sulfuration enzymes family. Forms homodimers. May form homotetramers from two homodimers. Pyridoxal 5'-phosphate is required as a cofactor.

The protein resides in the plastid. The protein localises to the chloroplast. It carries out the reaction L-mimosine + H2O = 3-hydroxy-4H-pyrid-4-one + pyruvate + NH4(+). It catalyses the reaction L,L-cystathionine + H2O = L-homocysteine + pyruvate + NH4(+). The enzyme catalyses an S-substituted L-cysteine + H2O = a thiol + pyruvate + NH4(+). In terms of biological role, catalyzes the degradation of mimosine, which is a toxic secondary metabolite found in all Mimosa and Leucaena species. Catalyzes the degradation of cystathionine, but seems to have lower preference toward cystathionine over mimosine. The sequence is that of Mimosinase, chloroplastic from Mimosa pudica (Sensitive plant).